The sequence spans 410 residues: Cysteine desulfurase IscS (410 aa).

Residues Ala80–Thr81, Asn160, Gln188, and Ser208–His210 contribute to the pyridoxal 5'-phosphate site. Lys211 is modified (N6-(pyridoxal phosphate)lysine). Position 248 (Thr248) interacts with pyridoxal 5'-phosphate. Cys334 acts as the Cysteine persulfide intermediate in catalysis. Residue Cys334 coordinates [2Fe-2S] cluster.

It belongs to the class-V pyridoxal-phosphate-dependent aminotransferase family. NifS/IscS subfamily. As to quaternary structure, homodimer. Forms a heterotetramer with IscU, interacts with other sulfur acceptors. Pyridoxal 5'-phosphate serves as cofactor.

The protein localises to the cytoplasm. The catalysed reaction is (sulfur carrier)-H + L-cysteine = (sulfur carrier)-SH + L-alanine. It participates in cofactor biosynthesis; iron-sulfur cluster biosynthesis. Its function is as follows. Master enzyme that delivers sulfur to a number of partners involved in Fe-S cluster assembly, tRNA modification or cofactor biosynthesis. Catalyzes the removal of elemental sulfur atoms from cysteine to produce alanine. Functions as a sulfur delivery protein for Fe-S cluster synthesis onto IscU, an Fe-S scaffold assembly protein, as well as other S acceptor proteins. This Rickettsia africae (strain ESF-5) protein is Cysteine desulfurase IscS.